We begin with the raw amino-acid sequence, 179 residues long: MYMLGSLCKEAVAQSLMSKLGCSSVMQVPKVVKVCLNMGIGIGAMDSKVMDSCSRDLALISAQKPVVTRARRSIAGFKIRKGFPIGCMVTLRGKKMYEFLDRLINIALPRERDFKGLSMSQFDGHGNISFGVKEHISFLEVDYDKIDKVRGFDVSVVTTAKSDYDAKALLTELGFPFVN.

This sequence belongs to the universal ribosomal protein uL5 family. Part of the 50S ribosomal subunit; part of the 5S rRNA/L5/L18/L25 subcomplex. Contacts the 5S rRNA and the P site tRNA. Forms a bridge to the 30S subunit in the 70S ribosome.

This is one of the proteins that bind and probably mediate the attachment of the 5S RNA into the large ribosomal subunit, where it forms part of the central protuberance. In the 70S ribosome it contacts protein S13 of the 30S subunit (bridge B1b), connecting the 2 subunits; this bridge is implicated in subunit movement. Contacts the P site tRNA; the 5S rRNA and some of its associated proteins might help stabilize positioning of ribosome-bound tRNAs. In Anaplasma marginale (strain Florida), this protein is Large ribosomal subunit protein uL5.